A 289-amino-acid polypeptide reads, in one-letter code: Cytochrome bc1 complex cytochrome c subunit (289 aa).

The span at 1–11 shows a compositional bias: basic residues; that stretch reads MKKLGFTRSSR. Positions 1–28 are disordered; the sequence is MKKLGFTRSSRRCSQPQEREQESERSRR. The helical transmembrane segment at 37–55 threads the bilayer; it reads GLLLLVALTVSGGLAAVLT. 2 consecutive Cytochrome c domains span residues 69-149 and 170-248; these read ALLR…QANG and TDLG…RTVI. The heme c site is built by cysteine 82, cysteine 85, histidine 86, cysteine 183, cysteine 186, and histidine 187. The chain crosses the membrane as a helical span at residues 267 to 287; sequence GMAIWIIGMVTAIGLALWIGA.

The cytochrome bc1 complex is composed of a cytochrome b (QcrB), the Rieske iron-sulfur protein (QcrA) and a diheme cytochrome c (QcrC) subunit. Binds 2 heme c groups covalently per subunit.

Its subcellular location is the cell membrane. The catalysed reaction is a quinol + 2 Fe(III)-[cytochrome c](out) = a quinone + 2 Fe(II)-[cytochrome c](out) + 2 H(+)(out). Its function is as follows. Cytochrome b subunit of the cytochrome bc1 complex, an essential component of the respiratory electron transport chain required for ATP synthesis. The bc1 complex catalyzes the oxidation of ubiquinol and the reduction of cytochrome c in the respiratory chain. The bc1 complex operates through a Q-cycle mechanism that couples electron transfer to generation of the proton gradient that drives ATP synthesis. The polypeptide is Cytochrome bc1 complex cytochrome c subunit (qcrC) (Mycobacterium leprae (strain TN)).